Reading from the N-terminus, the 1462-residue chain is MAPVHGDDSLSDSGSFVSSRARREKKSKKGRQEALERLKKAKAGEKYKYEVEDFTGVYEEVDEEQYSKLVQARQDDDWIVDDDGIGYVEDGREIFDDDLEDDALDADEKGKDGKARNKDKRNVKKLAVTKPNNIKSMFIACAGKKTADKAVDLSKDGLLGDILQDLNTETPQITPPPVMILKKKRSIGASPNPFSVHTATAVPSGKIASPVSRKEPPLTPVPLKRAEFAGDDVQVESTEEEQESGAMEFEDGDFDEPMEVEEVDLEPMAAKAWDKESEPAEEVKQEADSGKGTVSYLGSFLPDVSCWDIDQEGDSSFSVQEVQVDSSHLPLVKGADEEQVFHFYWLDAYEDQYNQPGVVFLFGKVWIESAETHVSCCVMVKNIERTLYFLPREMKIDLNTGKETGTPISMKDVYEEFDEKIATKYKIMKFKSKPVEKNYAFEIPDVPEKSEYLEVKYSAEMPQLPQDLKGETFSHVFGTNTSSLELFLMNRKIKGPCWLEVKSPQLLNQPVSWCKVEAMALKPDLVNVIKDVSPPPLVVMAFSMKTMQNAKNHQNEIIAMAALVHHSFALDKAAPKPPFQSHFCVVSKPKDCIFPYAFKEVIEKKNVKVEVAATERTLLGFFLAKVHKIDPDIIVGHNIYGFELEVLLQRINVCKAPHWSKIGRLKRSNMPKLGGRSGFGERNATCGRMICDVEISAKELIRCKSYHLSELVQQILKTERVVIPMENIQNMYSESSQLLYLLEHTWKDAKFILQIMCELNVLPLALQITNIAGNIMSRTLMGGRSERNEFLLLHAFYENNYIVPDKQIFRKPQQKLGDEDEEIDGDTNKYKKGRKKAAYAGGLVLDPKVGFYDKFILLLDFNSLYPSIIQEFNICFTTVQRVASEAQKVTEDGEQEQIPELPDPSLEMGILPREIRKLVERRKQVKQLMKQQDLNPDLILQYDIRQKALKLTANSMYGCLGFSYSRFYAKPLAALVTYKGREILMHTKEMVQKMNLEVIYGDTDSIMINTNSTNLEEVFKLGNKVKSEVNKLYKLLEIDIDGVFKSLLLLKKKKYAALVVEPTSDGNYVTKQELKGLDIVRRDWCDLAKDTGNFVIGQILSDQSRDTIVENIQKRLIEIGENVLNGSVPVSQFEINKALTKDPQDYPDKKSLPHVHVALWINSQGGRKVKAGDTVSYVICQDGSNLTASQRAYAPEQLQKQDNLTIDTQYYLAQQIHPVVARICEPIDGIDAVLIATWLGLDPTQFRVHHYHKDEENDALLGGPAQLTDEEKYRDCERFKCPCPTCGTENIYDNVFDGSGTDMEPSLYRCSNIDCKASPLTFTVQLSNKLIMDIRRFIKKYYDGWLICEEPTCRNRTRHLPLQFSRTGPLCPACMKATLQPEYSDKSLYTQLCFYRYIFDAECALEKLTTDHEKDKLKKQFFTPKVLQDYRKLKNTAEQFLSRSGYSEVNLSKLFAGCAVKS.

Disordered stretches follow at residues 1–33 and 98–123; these read MAPV…GRQE and DLED…KRNV. The span at 20–29 shows a compositional bias: basic residues; sequence RARREKKSKK. Positions 106-116 are enriched in basic and acidic residues; the sequence is ADEKGKDGKAR. Thr-174 carries the phosphothreonine modification. 3 positions are modified to phosphoserine: Ser-186, Ser-190, and Ser-209. The residue at position 224 (Lys-224) is an N6-acetyllysine. The interval 232–251 is disordered; that stretch reads DVQVESTEEEQESGAMEFED. Residue Thr-406 is modified to Phosphothreonine. The segment at 650–715 is DNA-binding; the sequence is RINVCKAPHW…YHLSELVQQI (66 aa). At Lys-970 the chain carries N6-succinyllysine. Positions 1245–1376 are DNA-binding; the sequence is QFRVHHYHKD…TGPLCPACMK (132 aa). 8 residues coordinate Zn(2+): Cys-1283, Cys-1286, Cys-1310, Cys-1315, Cys-1348, Cys-1353, Cys-1371, and Cys-1374. The CysA-type zinc finger occupies 1283–1318; sequence CPTCGTENIYDNVFDGSGTDMEPSLYRCSNIDCKAS. Residues 1348 to 1374 carry the CysB motif motif; the sequence is CEEPTCRNRTRHLPLQFSRTGPLCPAC.

The protein belongs to the DNA polymerase type-B family. Component of the alpha DNA polymerase complex (also known as the alpha DNA polymerase-primase complex) consisting of four subunits: the catalytic subunit POLA1, the regulatory subunit POLA2, and the primase complex subunits PRIM1 and PRIM2 respectively. Interacts with PARP1; this interaction functions as part of the control of replication fork progression. Interacts with MCM10 and WDHD1; these interactions recruit the polymerase alpha complex to the pre-replicative complex bound to DNA. Interacts with RPA1; this interaction stabilizes the replicative complex and reduces the misincorporation rate of DNA polymerase alpha by acting as a fidelity clamp. As to quaternary structure, (Microbial infection) Interacts with SV40 Large T antigen; this interaction allows viral DNA replication. In terms of assembly, (Microbial infection) Interacts with herpes simplex virus 1/HHV-1 replication origin-binding protein UL9. Post-translationally, a 165 kDa form is probably produced by proteolytic cleavage at Lys-124.

The protein localises to the nucleus. Its subcellular location is the cytoplasm. It is found in the cytosol. The enzyme catalyses DNA(n) + a 2'-deoxyribonucleoside 5'-triphosphate = DNA(n+1) + diphosphate. Its activity is regulated as follows. Autoinhibited in apo-primosome, where the zinc motif of POLA1 and oligonucleotide/olicosaccharide-binding domain of POLA2 are placed into the active site blocking RNA:DNA duplex entry. Catalytic subunit of the DNA polymerase alpha complex (also known as the alpha DNA polymerase-primase complex) which plays an essential role in the initiation of DNA synthesis. During the S phase of the cell cycle, the DNA polymerase alpha complex (composed of a catalytic subunit POLA1, a regulatory subunit POLA2 and two primase subunits PRIM1 and PRIM2) is recruited to DNA at the replicative forks via direct interactions with MCM10 and WDHD1. The primase subunit of the polymerase alpha complex initiates DNA synthesis by oligomerising short RNA primers on both leading and lagging strands. These primers are initially extended by the polymerase alpha catalytic subunit and subsequently transferred to polymerase delta and polymerase epsilon for processive synthesis on the lagging and leading strand, respectively. The reason this transfer occurs is because the polymerase alpha has limited processivity and lacks intrinsic 3' exonuclease activity for proofreading error, and therefore is not well suited for replicating long complexes. In the cytosol, responsible for a substantial proportion of the physiological concentration of cytosolic RNA:DNA hybrids, which are necessary to prevent spontaneous activation of type I interferon responses. The protein is DNA polymerase alpha catalytic subunit (POLA1) of Homo sapiens (Human).